Consider the following 301-residue polypeptide: MVFVKSTKSNAYFKRYQVKFRRRRDGKTDYRARIRLINQDKNKYNTPKYRFVVRFTNKDIVAQIVSASIAGDIVKASAYAHELPQYGLTVGLTNYAAAYCTGLLLARRVLKMLEMDDEYEGNVEATGEDFSVEPTDSRRPFRALLDVGLIRTTTGNRVFGALKGALDGGLDIPHSDKRFAGFHKENKQLDAEIHRNYIYGGHVSNYMKLLGEDEPEKLQTHFSAYIKKGVEAESIEELYKKVHAAIRADPNPKKTVKPAPKQHKRYNLKKLTYEERKNKLIERVKALNGAGGDDDDEDDEE.

It belongs to the universal ribosomal protein uL18 family. As to quaternary structure, component of the large ribosomal subunit (LSU). As to expression, expressed in seedlings, roots, stems, leaves, inflorescences and siliques.

The protein resides in the cytoplasm. The protein localises to the nucleus. Its subcellular location is the nucleolus. It localises to the nucleoplasm. Component of the ribosome, a large ribonucleoprotein complex responsible for the synthesis of proteins in the cell. The small ribosomal subunit (SSU) binds messenger RNAs (mRNAs) and translates the encoded message by selecting cognate aminoacyl-transfer RNA (tRNA) molecules. The large subunit (LSU) contains the ribosomal catalytic site termed the peptidyl transferase center (PTC), which catalyzes the formation of peptide bonds, thereby polymerizing the amino acids delivered by tRNAs into a polypeptide chain. The nascent polypeptides leave the ribosome through a tunnel in the LSU and interact with protein factors that function in enzymatic processing, targeting, and the membrane insertion of nascent chains at the exit of the ribosomal tunnel. Seems involved in the regulation of cell proliferation. Essential in leaf polarity establishment, probably having a role for translation in leaf dorsoventral patterning to specify leaf adaxial identity. The protein is Large ribosomal subunit protein uL18z of Arabidopsis thaliana (Mouse-ear cress).